A 65-amino-acid polypeptide reads, in one-letter code: Hainantoxin-X.3 (65 aa).

The N-terminal stretch at 1-20 (MNMKILVLVAVLCLVVSTHA) is a signal peptide. A propeptide spanning residues 21-37 (ERHSKTDMGDSPMIQER) is cleaved from the precursor. Disulfide bonds link Cys-39–Cys-56, Cys-46–Cys-59, and Cys-55–Cys-64.

The protein belongs to the neurotoxin 36 family. 02 subfamily. Expressed by the venom gland.

Its subcellular location is the secreted. Its function is as follows. Reversibly blocks N-type calcium channels (Cav2.2/CACNA1B) in rat dorsal root ganglion cells. Elicits no toxic symptoms in either vertebrates or invertebrates during a period of 48 hours post-injection, when it was assayed in vivo by direct injection into mice and cockroaches. The sequence is that of Hainantoxin-X.3 from Cyriopagopus hainanus (Chinese bird spider).